The sequence spans 271 residues: Type III pantothenate kinase (271 aa).

ATP is bound at residue aspartate 5–lysine 12. Substrate-binding positions include tyrosine 85 and glycine 92–arginine 95. Residue aspartate 94 is the Proton acceptor of the active site. Aspartate 114 serves as a coordination point for K(+). Residue threonine 117 coordinates ATP. A substrate-binding site is contributed by threonine 169.

This sequence belongs to the type III pantothenate kinase family. Homodimer. Requires NH4(+) as cofactor. K(+) serves as cofactor.

It is found in the cytoplasm. The catalysed reaction is (R)-pantothenate + ATP = (R)-4'-phosphopantothenate + ADP + H(+). The protein operates within cofactor biosynthesis; coenzyme A biosynthesis; CoA from (R)-pantothenate: step 1/5. In terms of biological role, catalyzes the phosphorylation of pantothenate (Pan), the first step in CoA biosynthesis. This is Type III pantothenate kinase from Methylacidiphilum infernorum (isolate V4) (Methylokorus infernorum (strain V4)).